The chain runs to 220 residues: Translation initiation factor 6 (220 aa).

Belongs to the eIF-6 family.

Functionally, binds to the 50S ribosomal subunit and prevents its association with the 30S ribosomal subunit to form the 70S initiation complex. The sequence is that of Translation initiation factor 6 from Pyrobaculum arsenaticum (strain DSM 13514 / JCM 11321 / PZ6).